A 156-amino-acid polypeptide reads, in one-letter code: Arginine repressor (156 aa).

Belongs to the ArgR family.

Its subcellular location is the cytoplasm. The protein operates within amino-acid biosynthesis; L-arginine biosynthesis [regulation]. Regulates arginine biosynthesis genes. The protein is Arginine repressor of Escherichia fergusonii (strain ATCC 35469 / DSM 13698 / CCUG 18766 / IAM 14443 / JCM 21226 / LMG 7866 / NBRC 102419 / NCTC 12128 / CDC 0568-73).